The sequence spans 234 residues: HTH-type transcriptional regulator ArcR (234 aa).

40-129 (VRHYTKGQVI…MAFLCKANDD (90 aa)) lines the a nucleoside 3',5'-cyclic phosphate pocket. The HTH crp-type domain occupies 155 to 228 (KFAKDRIIKL…HKNWLVSKHL (74 aa)). The H-T-H motif DNA-binding region spans 188–207 (IQLMSDMAGISRETAGHIIH).

The protein resides in the cytoplasm. Functionally, positively regulates the expression of the arcABDCR operon under anaerobic conditions, thus playing an essential role in arginine catabolism. May also control the expression of genes encoding proteins which are involved in anaerobic metabolism. Can bind cyclic AMP. This is HTH-type transcriptional regulator ArcR (arcR) from Staphylococcus aureus (strain Mu50 / ATCC 700699).